We begin with the raw amino-acid sequence, 261 residues long: Anamorsin homolog (261 aa).

The segment at 4 to 134 (VQENNQVLYI…EIGSAAKLSL (131 aa)) is N-terminal SAM-like domain. The tract at residues 134-173 (LGGGANKAKVAAVWKLDVDDDGEAEERIDEDELLDEEDKV) is linker. Residues Cys-183, Cys-192, Cys-195, and Cys-197 each contribute to the [2Fe-2S] cluster site. The tract at residues 183–197 (CGTTGKRKACKDCSC) is fe-S binding site A. Cys-222, Cys-225, Cys-233, and Cys-236 together coordinate [4Fe-4S] cluster. Short sequence motifs (cx2C motif) lie at residues 222–225 (CGSC) and 233–236 (CATC). The interval 222–236 (CGSCYLGDAFRCATC) is fe-S binding site B.

Belongs to the anamorsin family. As to quaternary structure, monomer. It depends on [2Fe-2S] cluster as a cofactor. The cofactor is [4Fe-4S] cluster.

The protein resides in the cytoplasm. The protein localises to the mitochondrion intermembrane space. Functionally, component of the cytosolic iron-sulfur (Fe-S) protein assembly (CIA) machinery. Required for the maturation of extramitochondrial Fe-S proteins. Part of an electron transfer chain functioning in an early step of cytosolic Fe-S biogenesis, facilitating the de novo assembly of a [4Fe-4S] cluster on the cytosolic Fe-S scaffold complex. Electrons are transferred from NADPH via a FAD- and FMN-containing diflavin oxidoreductase. Together with the diflavin oxidoreductase, also required for the assembly of the diferric tyrosyl radical cofactor of ribonucleotide reductase (RNR), probably by providing electrons for reduction during radical cofactor maturation in the catalytic small subunit. In Culex quinquefasciatus (Southern house mosquito), this protein is Anamorsin homolog.